A 93-amino-acid polypeptide reads, in one-letter code: Small ribosomal subunit protein uS19 (93 aa).

This sequence belongs to the universal ribosomal protein uS19 family.

Its function is as follows. Protein S19 forms a complex with S13 that binds strongly to the 16S ribosomal RNA. The protein is Small ribosomal subunit protein uS19 of Campylobacter hominis (strain ATCC BAA-381 / DSM 21671 / CCUG 45161 / LMG 19568 / NCTC 13146 / CH001A).